Here is a 194-residue protein sequence, read N- to C-terminus: MDLVSPSEHLCYVRCTYCNTVLAVGVPCKRLMDTVTVKCGHCNNLSFLSPRPPMVQPLSPTDHPLGPFQGPCTDCRRNQPLPLVSPTSNEGSPRAPFVVKPPEKKHRLPSAYNRFMREEIQRIKAAKPDIPHREAFSMAAKNWAKCDPRCSSTVSTSNSNPEPRVVAAPIPHQERANEQVVESFDIFKQMERSG.

The C4-type zinc finger occupies 15–42; sequence CTYCNTVLAVGVPCKRLMDTVTVKCGHC. The disordered stretch occupies residues 83 to 103; that stretch reads LVSPTSNEGSPRAPFVVKPPE.

Belongs to the YABBY family.

Its subcellular location is the nucleus. Its function is as follows. Regulates carpel specification in flower development. Severe or intermediate mutation in DL causes complete or partial homeotic conversion of carpels into stamens without affecting the identities of other floral organs. Interacts antagonistically with class B genes and controls floral meristem determinacy. Regulates midrib formation in leaves probably by inducing cell proliferation in the central region of the leaf. The chain is Protein DROOPING LEAF (DL) from Oryza sativa subsp. japonica (Rice).